Consider the following 347-residue polypeptide: Large ribosomal subunit protein uL10 (347 aa).

The interval 312–347 (AAAPAEEEVKKEEEPEEEEEDHAEEDGMAGLGALFG) is disordered. A compositionally biased stretch (acidic residues) spans 325–338 (EPEEEEEDHAEEDG).

It belongs to the universal ribosomal protein uL10 family. Part of the 50S ribosomal subunit. Forms part of the ribosomal stalk which helps the ribosome interact with GTP-bound translation factors. Forms a heptameric L10(L12)2(L12)2(L12)2 complex, where L10 forms an elongated spine to which the L12 dimers bind in a sequential fashion.

Functionally, forms part of the ribosomal stalk, playing a central role in the interaction of the ribosome with GTP-bound translation factors. The polypeptide is Large ribosomal subunit protein uL10 (Methanosarcina acetivorans (strain ATCC 35395 / DSM 2834 / JCM 12185 / C2A)).